The chain runs to 378 residues: Holliday junction branch migration complex subunit RuvB 1 (378 aa).

The segment covering Met1–Asn12 has biased composition (polar residues). Residues Met1 to Arg62 are disordered. Positions Ala13–Tyr222 are large ATPase domain (RuvB-L). ATP is bound by residues Leu61, Arg62, Gly103, Lys106, Thr107, Thr108, Glu169–Phe171, Arg212, Tyr222, and Arg259. A Mg(2+)-binding site is contributed by Thr107. Residues Glu223–Gln293 are small ATPAse domain (RuvB-S). Residues Pro296–Ser378 are head domain (RuvB-H). The DNA site is built by Arg351 and Arg356.

The protein belongs to the RuvB family. Homohexamer. Forms an RuvA(8)-RuvB(12)-Holliday junction (HJ) complex. HJ DNA is sandwiched between 2 RuvA tetramers; dsDNA enters through RuvA and exits via RuvB. An RuvB hexamer assembles on each DNA strand where it exits the tetramer. Each RuvB hexamer is contacted by two RuvA subunits (via domain III) on 2 adjacent RuvB subunits; this complex drives branch migration. In the full resolvosome a probable DNA-RuvA(4)-RuvB(12)-RuvC(2) complex forms which resolves the HJ.

The protein localises to the cytoplasm. The enzyme catalyses ATP + H2O = ADP + phosphate + H(+). Functionally, the RuvA-RuvB-RuvC complex processes Holliday junction (HJ) DNA during genetic recombination and DNA repair, while the RuvA-RuvB complex plays an important role in the rescue of blocked DNA replication forks via replication fork reversal (RFR). RuvA specifically binds to HJ cruciform DNA, conferring on it an open structure. The RuvB hexamer acts as an ATP-dependent pump, pulling dsDNA into and through the RuvAB complex. RuvB forms 2 homohexamers on either side of HJ DNA bound by 1 or 2 RuvA tetramers; 4 subunits per hexamer contact DNA at a time. Coordinated motions by a converter formed by DNA-disengaged RuvB subunits stimulates ATP hydrolysis and nucleotide exchange. Immobilization of the converter enables RuvB to convert the ATP-contained energy into a lever motion, pulling 2 nucleotides of DNA out of the RuvA tetramer per ATP hydrolyzed, thus driving DNA branch migration. The RuvB motors rotate together with the DNA substrate, which together with the progressing nucleotide cycle form the mechanistic basis for DNA recombination by continuous HJ branch migration. Branch migration allows RuvC to scan DNA until it finds its consensus sequence, where it cleaves and resolves cruciform DNA. The protein is Holliday junction branch migration complex subunit RuvB 1 of Synechococcus sp. (strain JA-3-3Ab) (Cyanobacteria bacterium Yellowstone A-Prime).